We begin with the raw amino-acid sequence, 500 residues long: Na(+)/H(+) antiporter NhaB (500 aa).

Transmembrane regions (helical) follow at residues 28 to 50 (FLLSNPLLLWLAGPTVAAWVLVG), 68 to 88 (GGLLVLEALLLGLASPEALYA), 98 to 118 (LLLMFMVAGIYFMKDLLLLLF), 121 to 141 (LLLGVRSKTLLSLLFCLLAAL), 145 to 165 (FLDALTVTAVVISVAVAFFAV), 205 to 225 (LLMHAAVGTALGGVCTLVGEP), 244 to 264 (QVAPVSMPVLAAGLLTCVALE), 301 to 318 (ALLVQALAALVLMIGLAL), 350 to 370 (FQEALPFTALLVAFFAVVAVI), 394 to 414 (MLFIANGLLSAISDNVFVATI), 449 to 469 (VATPNGQAAFLFLLTSSIAPL), and 477 to 497 (MVWMALPYTLVMGGLGWWAVS).

It belongs to the NhaB Na(+)/H(+) (TC 2.A.34) antiporter family.

The protein localises to the cell inner membrane. The catalysed reaction is 2 Na(+)(in) + 3 H(+)(out) = 2 Na(+)(out) + 3 H(+)(in). Its function is as follows. Na(+)/H(+) antiporter that extrudes sodium in exchange for external protons. The chain is Na(+)/H(+) antiporter NhaB from Pseudomonas paraeruginosa (strain DSM 24068 / PA7) (Pseudomonas aeruginosa (strain PA7)).